The chain runs to 327 residues: Beta-ketoacyl-[acyl-carrier-protein] synthase III (327 aa).

Active-site residues include C114 and H254. Residues 255–259 are ACP-binding; it reads QANQR. The active site involves N284.

It belongs to the thiolase-like superfamily. FabH family. As to quaternary structure, homodimer.

It is found in the cytoplasm. The enzyme catalyses malonyl-[ACP] + acetyl-CoA + H(+) = 3-oxobutanoyl-[ACP] + CO2 + CoA. It functions in the pathway lipid metabolism; fatty acid biosynthesis. In terms of biological role, catalyzes the condensation reaction of fatty acid synthesis by the addition to an acyl acceptor of two carbons from malonyl-ACP. Catalyzes the first condensation reaction which initiates fatty acid synthesis and may therefore play a role in governing the total rate of fatty acid production. Possesses both acetoacetyl-ACP synthase and acetyl transacylase activities. Its substrate specificity determines the biosynthesis of branched-chain and/or straight-chain of fatty acids. This chain is Beta-ketoacyl-[acyl-carrier-protein] synthase III, found in Levilactobacillus brevis (strain ATCC 367 / BCRC 12310 / CIP 105137 / JCM 1170 / LMG 11437 / NCIMB 947 / NCTC 947) (Lactobacillus brevis).